A 242-amino-acid polypeptide reads, in one-letter code: Glutamate transport ATP-binding protein GluA (242 aa).

The 235-residue stretch at 2 to 236 (IKMTGVQKFF…PQTDRAKDFL (235 aa)) folds into the ABC transporter domain. 34-41 (GPSGSGKS) contacts ATP.

It belongs to the ABC transporter superfamily. As to quaternary structure, the complex is composed of two ATP-binding proteins (GluA), two transmembrane proteins (GluC and GluD) and a solute-binding protein (GluB).

It localises to the cell membrane. It catalyses the reaction a polar amino acid(out) + ATP + H2O = a polar amino acid(in) + ADP + phosphate + H(+). It carries out the reaction L-glutamate(out) + ATP + H2O = L-glutamate(in) + ADP + phosphate + H(+). Part of the ABC transporter complex GluABCD involved in glutamate uptake. Probably responsible for energy coupling to the transport system. The polypeptide is Glutamate transport ATP-binding protein GluA (Corynebacterium efficiens (strain DSM 44549 / YS-314 / AJ 12310 / JCM 11189 / NBRC 100395)).